The chain runs to 212 residues: Claudin-7-A (212 aa).

At 1 to 7 (MANSGVQ) the chain is on the cytoplasmic side. A helical membrane pass occupies residues 8–28 (LLGFGLSLIGIIGLIVGTILP). At 29–81 (QWKMSAYVGDSIITAVATYQGLWMSCAFQSTGQLQCKIYDSILQLDSDLQATR) the chain is on the extracellular side. The helical transmembrane segment at 82–102 (ALMIVGIIVSIAGLGVASIGM) threads the bilayer. Residues 103–119 (KCTTCGADDKVRKTRTA) lie on the Cytoplasmic side of the membrane. The helical transmembrane segment at 120–140 (MTGGIILLVGALCAVVACSWF) threads the bilayer. Residues 141-162 (AHNVIRAFYNPFTPVNTKFEFG) lie on the Extracellular side of the membrane. A helical transmembrane segment spans residues 163 to 183 (AAIFIAWGGSFLDVLGGAMLA). Residues 184–212 (ASCPRSKQVSKYPKSNSTRSANGSNKEYV) lie on the Cytoplasmic side of the membrane. Positions 191–212 (QVSKYPKSNSTRSANGSNKEYV) are disordered.

The protein belongs to the claudin family.

It is found in the cell junction. The protein localises to the tight junction. The protein resides in the cell membrane. Plays a major role in tight junction-specific obliteration of the intercellular space. The sequence is that of Claudin-7-A from Danio rerio (Zebrafish).